We begin with the raw amino-acid sequence, 498 residues long: Transcription factor bHLH78 (498 aa).

2 disordered regions span residues 1 to 24 (MDNE…FEHQ) and 207 to 297 (LVSP…PPKD). A compositionally biased stretch (polar residues) spans 233–246 (NPISTASPSPSFSK). Positions 259–270 (SSEEKGGKRRRE) are enriched in basic and acidic residues. Positions 271 to 281 (EEDDEEEEGEG) are enriched in acidic residues. A bHLH domain is found at 307–357 (QATDSHSLAERVRREKIGERMKLLQDLVPGCNKVTGKALMLDEIINYVQSL).

Homodimer. Binds reversibly to CRY2 after blue light illumination. In terms of tissue distribution, expressed constitutively in roots, leaves, stems, and flowers.

It is found in the nucleus. Its function is as follows. Transcription factor that binds DNA to G box 5'-CACGTG-3' and to E-box 5'-CANNTG-3'. Binds to chromatin DNA of the FT gene and promotes its expression, and thus triggers flowering in response to blue light. The polypeptide is Transcription factor bHLH78 (BHLH78) (Arabidopsis thaliana (Mouse-ear cress)).